Consider the following 149-residue polypeptide: MASSDIQVKELEKRASGQAFELILSPRSKESVPDFPLSPPKKKDLSLEEIQKKLEAAEERRKSHEAEVLKQLAEKREHEKEVLQKAIEENNNFSKMAEEKLTHKMEANKENREAQMAAKLERLREKDKHVEEVRKNKESKDPADETEAD.

Ala2 is subject to N-acetylalanine. Ser4 carries the phosphoserine modification. In terms of domain architecture, SLD spans 4–145 (SDIQVKELEK…NKESKDPADE (142 aa)). Lys9 carries the N6-acetyllysine modification. Position 16 is a phosphoserine; by PKA (Ser16). The residue at position 25 (Ser25) is a Phosphoserine; by CDK1, MAPK1 and MAPK3. The interval 27-46 (RSKESVPDFPLSPPKKKDLS) is disordered. N6-methyllysine is present on Lys29. The residue at position 31 (Ser31) is a Phosphoserine. At Ser38 the chain carries Phosphoserine; by CDK1, MAPK1 and MAPK3. Positions 41–140 (KKKDLSLEEI…EEVRKNKESK (100 aa)) form a coiled coil. Position 63 is a phosphoserine; by PKA (Ser63). Lys100 and Lys119 each carry N6-acetyllysine. Positions 104–143 (KMEANKENREAQMAAKLERLREKDKHVEEVRKNKESKDPA) are enriched in basic and acidic residues. The interval 104-149 (KMEANKENREAQMAAKLERLREKDKHVEEVRKNKESKDPADETEAD) is disordered.

This sequence belongs to the stathmin family. As to quaternary structure, binds to two alpha/beta-tubulin heterodimers. Interacts with KIST. Post-translationally, many different phosphorylated forms are observed depending on specific combinations among the sites which can be phosphorylated. MAPK is responsible for the phosphorylation of stathmin in response to NGF. Phosphorylation at Ser-16 seems to be required for neuron polarization. In terms of tissue distribution, highly expressed in the lateral nucleus of the amygdala.

It localises to the cytoplasm. Its subcellular location is the cytoskeleton. In terms of biological role, involved in the regulation of the microtubule (MT) filament system by destabilizing microtubules. Prevents assembly and promotes disassembly of microtubules. Phosphorylation at Ser-16 may be required for axon formation during neurogenesis. Involved in the control of the learned and innate fear. This chain is Stathmin (Stmn1), found in Mus musculus (Mouse).